A 271-amino-acid chain; its full sequence is 3-methyl-2-oxobutanoate hydroxymethyltransferase (271 aa).

Mg(2+)-binding residues include aspartate 52 and aspartate 91. Residues aspartate 52–serine 53, aspartate 91, and lysine 121 each bind 3-methyl-2-oxobutanoate. Glutamate 123 is a Mg(2+) binding site. The active-site Proton acceptor is the glutamate 189.

It belongs to the PanB family. In terms of assembly, homodecamer; pentamer of dimers. Requires Mg(2+) as cofactor.

The protein resides in the cytoplasm. The enzyme catalyses 3-methyl-2-oxobutanoate + (6R)-5,10-methylene-5,6,7,8-tetrahydrofolate + H2O = 2-dehydropantoate + (6S)-5,6,7,8-tetrahydrofolate. The protein operates within cofactor biosynthesis; (R)-pantothenate biosynthesis; (R)-pantoate from 3-methyl-2-oxobutanoate: step 1/2. Functionally, catalyzes the reversible reaction in which hydroxymethyl group from 5,10-methylenetetrahydrofolate is transferred onto alpha-ketoisovalerate to form ketopantoate. This is 3-methyl-2-oxobutanoate hydroxymethyltransferase from Acidothermus cellulolyticus (strain ATCC 43068 / DSM 8971 / 11B).